Here is a 240-residue protein sequence, read N- to C-terminus: Ubiquitin domain-containing protein 2 (240 aa).

Residues 1-48 (MGGCVGSHHDSSGSLNENSDGTGVALGRNQPLKREKPKWKSDYPMTDG) are disordered. Residues 12 to 21 (SGSLNENSDG) show a composition bias toward polar residues. Over residues 32–41 (LKREKPKWKS) the composition is skewed to basic and acidic residues. The Ubiquitin-like domain occupies 152–227 (CQLRLRLSTG…VQVIVSQPPT (76 aa)).

It localises to the cytoplasm. The sequence is that of Ubiquitin domain-containing protein 2 (ubtd2) from Danio rerio (Zebrafish).